Reading from the N-terminus, the 166-residue chain is Protein YciF (166 aa).

As to quaternary structure, homodimer.

The polypeptide is Protein YciF (yciF) (Escherichia coli (strain K12)).